A 476-amino-acid polypeptide reads, in one-letter code: Aspartyl/glutamyl-tRNA(Asn/Gln) amidotransferase subunit B (476 aa).

This sequence belongs to the GatB/GatE family. GatB subfamily. In terms of assembly, heterotrimer of A, B and C subunits.

It catalyses the reaction L-glutamyl-tRNA(Gln) + L-glutamine + ATP + H2O = L-glutaminyl-tRNA(Gln) + L-glutamate + ADP + phosphate + H(+). The catalysed reaction is L-aspartyl-tRNA(Asn) + L-glutamine + ATP + H2O = L-asparaginyl-tRNA(Asn) + L-glutamate + ADP + phosphate + 2 H(+). Allows the formation of correctly charged Asn-tRNA(Asn) or Gln-tRNA(Gln) through the transamidation of misacylated Asp-tRNA(Asn) or Glu-tRNA(Gln) in organisms which lack either or both of asparaginyl-tRNA or glutaminyl-tRNA synthetases. The reaction takes place in the presence of glutamine and ATP through an activated phospho-Asp-tRNA(Asn) or phospho-Glu-tRNA(Gln). This is Aspartyl/glutamyl-tRNA(Asn/Gln) amidotransferase subunit B from Listeria monocytogenes serovar 1/2a (strain ATCC BAA-679 / EGD-e).